The chain runs to 293 residues: Exosome complex component RRP4 (293 aa).

Residues Glu79–Arg159 form the S1 motif domain. A Phosphoserine modification is found at Ser124.

Belongs to the RRP4 family. Component of the RNA exosome core complex (Exo-9), composed of EXOSC1, EXOSC2, EXOSC3, EXOSC4, EXOSC5, EXOSC6, EXOSC7, EXOSC8 and EXOSC9; within the complex interacts with EXOSC4 and EXOSC7. The catalytically inactive RNA exosome core complex (Exo-9) associates with the catalytic subunit EXOSC10/RRP6. Exo-9 may associate with DIS3 to form the nucleolar exosome complex, or DIS3L to form the cytoplasmic exosome complex. Exo-9 is formed by a hexameric base ring consisting of the heterodimers EXOSC4-EXOSC9, EXOSC5-EXOSC8 and EXOSC6-EXOSC7, and a cap ring consisting of EXOSC1, EXOSC2 and EXOSC3. The RNA exosome complex associates with cofactors C1D/RRP47, MPHOSPH6/MPP6 and MTREX/MTR4. Interacts with GTPBP1. Interacts with ZFP36L1 (via N-terminus).

The protein resides in the cytoplasm. It is found in the nucleus. It localises to the nucleolus. Non-catalytic component of the RNA exosome complex which has 3'-&gt;5' exoribonuclease activity and participates in a multitude of cellular RNA processing and degradation events. In the nucleus, the RNA exosome complex is involved in proper maturation of stable RNA species such as rRNA, snRNA and snoRNA, in the elimination of RNA processing by-products and non-coding 'pervasive' transcripts, such as antisense RNA species and promoter-upstream transcripts (PROMPTs), and of mRNAs with processing defects, thereby limiting or excluding their export to the cytoplasm. The RNA exosome may be involved in Ig class switch recombination (CSR) and/or Ig variable region somatic hypermutation (SHM) by targeting AICDA deamination activity to transcribed dsDNA substrates. In the cytoplasm, the RNA exosome complex is involved in general mRNA turnover and specifically degrades inherently unstable mRNAs containing AU-rich elements (AREs) within their 3' untranslated regions, and in RNA surveillance pathways, preventing translation of aberrant mRNAs. It seems to be involved in degradation of histone mRNA. The catalytic inactive RNA exosome core complex of 9 subunits (Exo-9) is proposed to play a pivotal role in the binding and presentation of RNA for ribonucleolysis, and to serve as a scaffold for the association with catalytic subunits and accessory proteins or complexes. EXOSC2 as peripheral part of the Exo-9 complex stabilizes the hexameric ring of RNase PH-domain subunits through contacts with EXOSC4 and EXOSC7. This Bos taurus (Bovine) protein is Exosome complex component RRP4 (EXOSC2).